The following is a 130-amino-acid chain: Small ribosomal subunit protein uS11 (130 aa).

Belongs to the universal ribosomal protein uS11 family. Part of the 30S ribosomal subunit. Interacts with proteins S7 and S18. Binds to IF-3.

Located on the platform of the 30S subunit, it bridges several disparate RNA helices of the 16S rRNA. Forms part of the Shine-Dalgarno cleft in the 70S ribosome. This is Small ribosomal subunit protein uS11 from Pseudoalteromonas atlantica (strain T6c / ATCC BAA-1087).